The sequence spans 392 residues: Queuine tRNA-ribosyltransferase (392 aa).

The active-site Proton acceptor is Asp92. Substrate-binding positions include 92-96 (DSGGF), Asp146, Gln188, and Gly215. Residues 246–252 (GVGSPED) form an RNA binding region. Asp265 functions as the Nucleophile in the catalytic mechanism. Positions 270 to 274 (TRLGR) are RNA binding; important for wobble base 34 recognition. Zn(2+) contacts are provided by Cys303, Cys305, Cys308, and His334.

Belongs to the queuine tRNA-ribosyltransferase family. Homodimer. Within each dimer, one monomer is responsible for RNA recognition and catalysis, while the other monomer binds to the replacement base PreQ1. It depends on Zn(2+) as a cofactor.

It catalyses the reaction 7-aminomethyl-7-carbaguanine + guanosine(34) in tRNA = 7-aminomethyl-7-carbaguanosine(34) in tRNA + guanine. Its pathway is tRNA modification; tRNA-queuosine biosynthesis. In terms of biological role, catalyzes the base-exchange of a guanine (G) residue with the queuine precursor 7-aminomethyl-7-deazaguanine (PreQ1) at position 34 (anticodon wobble position) in tRNAs with GU(N) anticodons (tRNA-Asp, -Asn, -His and -Tyr). Catalysis occurs through a double-displacement mechanism. The nucleophile active site attacks the C1' of nucleotide 34 to detach the guanine base from the RNA, forming a covalent enzyme-RNA intermediate. The proton acceptor active site deprotonates the incoming PreQ1, allowing a nucleophilic attack on the C1' of the ribose to form the product. After dissociation, two additional enzymatic reactions on the tRNA convert PreQ1 to queuine (Q), resulting in the hypermodified nucleoside queuosine (7-(((4,5-cis-dihydroxy-2-cyclopenten-1-yl)amino)methyl)-7-deazaguanosine). The protein is Queuine tRNA-ribosyltransferase of Herpetosiphon aurantiacus (strain ATCC 23779 / DSM 785 / 114-95).